The sequence spans 391 residues: Arsenite methyltransferase (391 aa).

A disordered region spans residues 1-126 (MELWTHPTPA…TMVADRDPEE (126 aa)). Residues 28 to 39 (CSQPWATTPGTN) show a composition bias toward polar residues. Residues 40–65 (SSDASRTPTTASASATSKPQSASARA) are compositionally biased toward low complexity. Positions 102–116 (KRSTTCEATMSNDNE) are enriched in polar residues.

Belongs to the methyltransferase superfamily. Arsenite methyltransferase family.

The enzyme catalyses arsenic triglutathione + [thioredoxin]-dithiol + S-adenosyl-L-methionine + 2 H2O = methylarsonous acid + [thioredoxin]-disulfide + 3 glutathione + S-adenosyl-L-homocysteine + H(+). The catalysed reaction is arsenic triglutathione + 2 [thioredoxin]-dithiol + 2 S-adenosyl-L-methionine + H2O = dimethylarsinous acid + 2 [thioredoxin]-disulfide + 3 glutathione + 2 S-adenosyl-L-homocysteine + 2 H(+). It catalyses the reaction arsenic triglutathione + 3 [thioredoxin]-dithiol + 3 S-adenosyl-L-methionine = trimethylarsine + 3 [thioredoxin]-disulfide + 3 glutathione + 3 S-adenosyl-L-homocysteine + 3 H(+). Functionally, catalyzes the transfer of a methyl group from AdoMet to arsenite, producing methylated arsenicals. In Halobacterium salinarum (strain ATCC 700922 / JCM 11081 / NRC-1) (Halobacterium halobium), this protein is Arsenite methyltransferase.